The primary structure comprises 582 residues: Formate--tetrahydrofolate ligase (582 aa).

65-72 (TPLGEGKT) provides a ligand contact to ATP.

The protein belongs to the formate--tetrahydrofolate ligase family.

It carries out the reaction (6S)-5,6,7,8-tetrahydrofolate + formate + ATP = (6R)-10-formyltetrahydrofolate + ADP + phosphate. It participates in one-carbon metabolism; tetrahydrofolate interconversion. This Vibrio campbellii (strain ATCC BAA-1116) protein is Formate--tetrahydrofolate ligase.